The primary structure comprises 370 residues: Histidinol-phosphate aminotransferase 1 (370 aa).

At Lys-222 the chain carries N6-(pyridoxal phosphate)lysine.

The protein belongs to the class-II pyridoxal-phosphate-dependent aminotransferase family. Histidinol-phosphate aminotransferase subfamily. In terms of assembly, homodimer. Pyridoxal 5'-phosphate is required as a cofactor.

It carries out the reaction L-histidinol phosphate + 2-oxoglutarate = 3-(imidazol-4-yl)-2-oxopropyl phosphate + L-glutamate. It functions in the pathway amino-acid biosynthesis; L-histidine biosynthesis; L-histidine from 5-phospho-alpha-D-ribose 1-diphosphate: step 7/9. This is Histidinol-phosphate aminotransferase 1 from Bacillus cereus (strain ATCC 10987 / NRS 248).